The following is a 293-amino-acid chain: Glutamine sensor pib2 (293 aa).

Positions 38–75 are disordered; it reads APTRQATNGTGSVSGSPNSSSNSTPANQGSLPSHTNPQ. A compositionally biased stretch (low complexity) spans 44–62; it reads TNGTGSVSGSPNSSSNSTP. Positions 63 to 75 are enriched in polar residues; sequence ANQGSLPSHTNPQ. An FYVE-type; degenerate zinc finger spans residues 156–220; sequence DVSVCSFPSC…SCVSCFYEYL (65 aa). Zn(2+)-binding residues include Cys178, Cys181, Cys212, and Cys215. A compositionally biased stretch (polar residues) spans 242-256; that stretch reads APQQATTHPPSQPKN. Positions 242 to 276 are disordered; sequence APQQATTHPPSQPKNAVSVPIPKMDSTDSKGELPS. Ser259 bears the Phosphoserine mark.

Interacts with the TORC1 complex when activated by glutamine or cysteine.

The protein resides in the vacuole membrane. Activated by glutamine. Its function is as follows. Functions as an intracellular glutamine sensor that directly activates the TORC1 signaling pathway, to promote cell growth when glutamine is available. The sequence is that of Glutamine sensor pib2 from Schizosaccharomyces pombe (strain 972 / ATCC 24843) (Fission yeast).